Reading from the N-terminus, the 59-residue chain is MSAELKITLVRSAIGQSEKMKGRLLGMGLTKREKTVTLQDTPEIRGMIAKVAHLVRVEE.

It belongs to the universal ribosomal protein uL30 family. As to quaternary structure, part of the 50S ribosomal subunit.

The polypeptide is Large ribosomal subunit protein uL30 (Citrifermentans bemidjiense (strain ATCC BAA-1014 / DSM 16622 / JCM 12645 / Bem) (Geobacter bemidjiensis)).